Reading from the N-terminus, the 431-residue chain is POU domain, class 2, transcription factor 3 (431 aa).

Disordered stretches follow at residues 1–39 (MVNLEPMHTEIKMSGDVADSTDTRSTFGQVEPGNDRNGL), 130–180 (LLPQ…EPTD), and 248–267 (DAESSPSDPSASTPSSYPTL). The POU-specific domain occupies 176–250 (DEPTDLEELE…LLEKWLNDAE (75 aa)). The span at 251 to 267 (SSPSDPSASTPSSYPTL) shows a compositional bias: low complexity. Residues 274–333 (KRKKRTSIETNIRLTLEKRFQDNPKPSSEEISMIAEQLSMEKEVVRVWFCNRRQKEKRIN) constitute a DNA-binding region (homeobox). Composition is skewed to low complexity over residues 352-364 (PSGSLGPLSVPPV), 374-390 (SSCSPGNNSRPSSPGSG), and 398-419 (ASQNNSKAAMNSSSSSSFNSSG). Residues 352–419 (PSGSLGPLSV…SSSSSFNSSG (68 aa)) form a disordered region.

It belongs to the POU transcription factor family. Class-2 subfamily. Interacts (via the POU domain) with POU2AF1 and POU2AF2 in a DNA-dependent manner; this interaction recruits POU2AF2 to chromatin and increases POU2F3 transactivation activity. Skin, thymus, stomach and testis.

Its subcellular location is the nucleus. Transcription factor that binds to the octamer motif (5'-ATTTGCAT-3'). Regulates cell type-specific differentiation pathways. Involved in the regulation of keratinocytes differentiation. The POU2F3-POU2AF2/POU2AF3 complex drives the expression of tuft-cell-specific genes, a rare chemosensory cells that coordinate immune and neural functions within mucosal epithelial tissues. The sequence is that of POU domain, class 2, transcription factor 3 (Pou2f3) from Mus musculus (Mouse).